A 686-amino-acid chain; its full sequence is Phosphatidylinositol 4,5-bisphosphate-binding protein SLM1 (686 aa).

Positions 33-147 (RSMTSADHAN…KQLQGKNSLT (115 aa)) are disordered. A compositionally biased stretch (low complexity) spans 45 to 63 (QQQQQQQQQQQQQQQQQQQ). Positions 64 to 126 (SASFQNGSLT…PNIDSNTNVT (63 aa)) are enriched in polar residues. The segment covering 133–144 (NNNNGKQLQGKN) has biased composition (low complexity). Ser145, Ser150, and Ser153 each carry phosphoserine. Over residues 157–172 (SSLQRQRLAQQQQQQQ) the composition is skewed to low complexity. The disordered stretch occupies residues 157 to 176 (SSLQRQRLAQQQQQQQDPRS). Positions 296–381 (RLEDLRRDLI…FLHEAFDNLE (86 aa)) form a coiled coil. The PH domain occupies 468–581 (YEIKSGFLER…WFDNLKILTS (114 aa)). The tract at residues 626–669 (VENDENDDINSNYVGSTVTPKLDNQTNTNTSMSSLPDTNDSELQ) is disordered. The segment covering 634–663 (INSNYVGSTVTPKLDNQTNTNTSMSSLPDT) has biased composition (polar residues). A PXIXIT-like, required for interaction with CNA1 and CNA2, and calcineurin-dependent dephosphorylation motif is present at residues 673 to 678 (PNIYIQ).

In terms of assembly, heterodimer of SLM1-SLM2. Binds phosphatidylinositol 4,5-bisphosphate, which is required for function. Interacts with the TORC2 subunits AVO2, BIT61 and TOR2. Interacts with the calcineurin catalytic subunits CNA1 and CNA2. Phosphorylated by the target of rapamycin complex 2 (TORC2) and dephosphorylated by serine/threonine-protein phosphatase 2B (calcineurin). Dephosphorylated in response to the disruption or inhibition of sphingolipid synthesis.

Its subcellular location is the cell membrane. Its function is as follows. Together with SLM2, acts as an effector of the TORC2- and calcineurin-signaling pathways. Phosphorylated and activated by TORC2 under favorable growth conditions. Mediates actin polarization via inhibition of calcineurin-dependent transcription. Upon nutrient limitation or environmental stress, gets dephosphorylated by calcineurin. Dephosphorylation inhibits its interaction with TORC2, thereby antagonizing TORC2 signaling and mediating calcineurin-dependent actin depolarization. May play a role in the response to the disruption of sphingolipid synthesis, where dephosphorylation of SLM1 leads to the activation and phosphorylation of YPK1 through the TORC2 and PKH1 pathways, which in turn phosphorylates ORM1 and LAG1 to activate sphingolipid synthesis. Also functions in heat-induced, calcineurin-mediated uracil permease (FUR4) endocytosis. The protein is Phosphatidylinositol 4,5-bisphosphate-binding protein SLM1 (SLM1) of Saccharomyces cerevisiae (strain ATCC 204508 / S288c) (Baker's yeast).